A 317-amino-acid polypeptide reads, in one-letter code: Acetyl-coenzyme A carboxylase carboxyl transferase subunit alpha (317 aa).

The CoA carboxyltransferase C-terminal domain maps to 39-293; that stretch reads RLKKKSISLT…KTSLAQGVAE (255 aa).

Belongs to the AccA family. Acetyl-CoA carboxylase is a heterohexamer composed of biotin carboxyl carrier protein (AccB), biotin carboxylase (AccC) and two subunits each of ACCase subunit alpha (AccA) and ACCase subunit beta (AccD).

The protein localises to the cytoplasm. The enzyme catalyses N(6)-carboxybiotinyl-L-lysyl-[protein] + acetyl-CoA = N(6)-biotinyl-L-lysyl-[protein] + malonyl-CoA. It functions in the pathway lipid metabolism; malonyl-CoA biosynthesis; malonyl-CoA from acetyl-CoA: step 1/1. Component of the acetyl coenzyme A carboxylase (ACC) complex. First, biotin carboxylase catalyzes the carboxylation of biotin on its carrier protein (BCCP) and then the CO(2) group is transferred by the carboxyltransferase to acetyl-CoA to form malonyl-CoA. This chain is Acetyl-coenzyme A carboxylase carboxyl transferase subunit alpha, found in Marinobacter nauticus (strain ATCC 700491 / DSM 11845 / VT8) (Marinobacter aquaeolei).